Here is a 564-residue protein sequence, read N- to C-terminus: Beta-hexosaminidase subunit B2 (564 aa).

The first 19 residues, 1–19 (MKLKFIFLILFFIIGNSIG), serve as a signal peptide directing secretion. N-linked (GlcNAc...) asparagine glycans are attached at residues asparagine 43, asparagine 84, asparagine 303, and asparagine 347. Glutamate 357 acts as the Proton donor in catalysis. 5 N-linked (GlcNAc...) asparagine glycosylation sites follow: asparagine 364, asparagine 377, asparagine 439, asparagine 524, and asparagine 551.

This sequence belongs to the glycosyl hydrolase 20 family.

It localises to the lysosome. The catalysed reaction is Hydrolysis of terminal non-reducing N-acetyl-D-hexosamine residues in N-acetyl-beta-D-hexosaminides.. Functionally, responsible for the degradation of GM2 gangliosides, and a variety of other molecules containing terminal N-acetyl hexosamines. The chain is Beta-hexosaminidase subunit B2 (hexb2) from Dictyostelium discoideum (Social amoeba).